The sequence spans 439 residues: Cysteine--tRNA ligase (439 aa).

Cys26 is a Zn(2+) binding site. The 'HIGH' region motif lies at 28-38; it reads PTVYNHVHIGN. 3 residues coordinate Zn(2+): Cys206, His231, and Glu235. The 'KMSKS' region signature appears at 263-267; sequence KMSKS. An ATP-binding site is contributed by Lys266.

It belongs to the class-I aminoacyl-tRNA synthetase family. Monomer. It depends on Zn(2+) as a cofactor.

It localises to the cytoplasm. The catalysed reaction is tRNA(Cys) + L-cysteine + ATP = L-cysteinyl-tRNA(Cys) + AMP + diphosphate. In Malacoplasma penetrans (strain HF-2) (Mycoplasma penetrans), this protein is Cysteine--tRNA ligase.